Consider the following 199-residue polypeptide: MQQQASAMRPEGAQPLIARAPSGIIDPNTGKPVGADDPFFLGVNRELSDKGFFVAATDDLITWARTGSLMWMTFGLACCAVEMMQLSMPRYDAERFGFAPRASPRQSDVMIVAGTLTNKMAPALRKVYDQMPEPRYVISMGSCANGGGYYHYSYSVVRGCDRIVPIDIYVPGCPPTAEALLYGVMLLQKKIRRTGTIER.

[4Fe-4S] cluster-binding residues include cysteine 78, cysteine 79, cysteine 143, and cysteine 173.

The protein belongs to the complex I 20 kDa subunit family. In terms of assembly, NDH-1 is composed of 14 different subunits. Subunits NuoB, C, D, E, F, and G constitute the peripheral sector of the complex. The cofactor is [4Fe-4S] cluster.

Its subcellular location is the cell inner membrane. It catalyses the reaction a quinone + NADH + 5 H(+)(in) = a quinol + NAD(+) + 4 H(+)(out). NDH-1 shuttles electrons from NADH, via FMN and iron-sulfur (Fe-S) centers, to quinones in the respiratory chain. The immediate electron acceptor for the enzyme in this species is believed to be ubiquinone. Couples the redox reaction to proton translocation (for every two electrons transferred, four hydrogen ions are translocated across the cytoplasmic membrane), and thus conserves the redox energy in a proton gradient. The sequence is that of NADH-quinone oxidoreductase subunit B 2 from Rhodopseudomonas palustris (strain BisB5).